The primary structure comprises 228 residues: Apoptosis regulator R1 (228 aa).

Residues 1–21 show a composition bias toward basic and acidic residues; that stretch reads LNPKKKENNGVKNGDREKQHE. A disordered region spans residues 1 to 29; sequence LNPKKKENNGVKNGDREKQHETGNTIFRG. A BH1 motif is present at residues 120–139; it reads SLFQGGVNWGRIVAFFVFGA. A BH2 motif is present at residues 171–186; the sequence is DWIQSNGGWNGFLTLY. The helical transmembrane segment at 207–227 threads the bilayer; that stretch reads TVLTGAVALGALMTVGALFAS.

This sequence belongs to the Bcl-2 family.

Its subcellular location is the membrane. Functionally, could be the homolog of mammalian Bcl-W. In Xenopus laevis (African clawed frog), this protein is Apoptosis regulator R1.